Here is a 308-residue protein sequence, read N- to C-terminus: ATP synthase gamma chain (308 aa).

It belongs to the ATPase gamma chain family. F-type ATPases have 2 components, CF(1) - the catalytic core - and CF(0) - the membrane proton channel. CF(1) has five subunits: alpha(3), beta(3), gamma(1), delta(1), epsilon(1). CF(0) has three main subunits: a, b and c.

The protein resides in the cell membrane. Produces ATP from ADP in the presence of a proton gradient across the membrane. The gamma chain is believed to be important in regulating ATPase activity and the flow of protons through the CF(0) complex. The polypeptide is ATP synthase gamma chain (Saccharopolyspora erythraea (strain ATCC 11635 / DSM 40517 / JCM 4748 / NBRC 13426 / NCIMB 8594 / NRRL 2338)).